The sequence spans 158 residues: RNA pyrophosphohydrolase (158 aa).

In terms of domain architecture, Nudix hydrolase spans 6–149 (GYRLNVGIVL…KRHVYRKVMK (144 aa)). Positions 38 to 59 (GGINIGETPEQAMYRELFEEIG) match the Nudix box motif.

Belongs to the Nudix hydrolase family. RppH subfamily. The cofactor is a divalent metal cation.

Functionally, accelerates the degradation of transcripts by removing pyrophosphate from the 5'-end of triphosphorylated RNA, leading to a more labile monophosphorylated state that can stimulate subsequent ribonuclease cleavage. This chain is RNA pyrophosphohydrolase, found in Blochmanniella floridana.